The sequence spans 272 residues: MMACHC-like protein (272 aa).

Substrate is bound by residues D121, 132–135, and 146–148; these read ILMQ and YYQ.

Belongs to the MMACHC family. Requires FAD as cofactor. It depends on FMN as a cofactor.

The protein resides in the cytoplasm. In terms of biological role, catalyzes the reductive dealkylation of cyanocobalamin to cob(II)alamin, using FAD or FMN as cofactor and NADPH as cosubstrate. Can also catalyze the glutathione-dependent reductive demethylation of methylcobalamin, and, with much lower efficiency, the glutathione-dependent reductive demethylation of adenosylcobalamin. Under anaerobic conditions cob(I)alamin is the first product; it is highly reactive and is converted to aquocob(II)alamin in the presence of oxygen. Binds cyanocobalamin, adenosylcobalamin, methylcobalamin and other, related vitamin B12 derivatives. This Caenorhabditis elegans protein is MMACHC-like protein (cblc-1).